Reading from the N-terminus, the 431-residue chain is Transmembrane protease serine 11C (431 aa).

Residues 1-33 (MARGQPRRSEEQWTALQNRTECKTKIKLTRCGK) lie on the Cytoplasmic side of the membrane. Residues 34–54 (ITLGILTAVLAAVLIGLIAYF) form a helical; Signal-anchor for type II membrane protein membrane-spanning segment. Topologically, residues 55–431 (AACGKDSFYY…RDWITSKTGL (377 aa)) are extracellular. In terms of domain architecture, SEA spans 60–177 (DSFYYHVSFK…SSFKFSDIAM (118 aa)). N-linked (GlcNAc...) asparagine glycosylation occurs at N99. The region spanning 200 to 430 (VAGGQDAEEG…YRDWITSKTG (231 aa)) is the Peptidase S1 domain. C225 and C241 are oxidised to a cystine. H240 functions as the Charge relay system in the catalytic mechanism. N-linked (GlcNAc...) asparagine glycosylation occurs at N276. D285 serves as the catalytic Charge relay system. N347 is a glycosylation site (N-linked (GlcNAc...) asparagine). Disulfide bonds link C350–C366 and C377–C406. The active-site Charge relay system is S381.

The protein belongs to the peptidase S1 family. Post-translationally, proteolytically cleaved via an autocatalytic mechanism. As to expression, expressed specifically in Purkinje neurons of the cerebellum (at protein level). Also detected in spinal cord.

The protein resides in the cell membrane. It is found in the cell projection. The protein localises to the dendrite. It localises to the perikaryon. In terms of biological role, serine protease which has a preference for Arg or Lys in position P1 and uncharged residues in positions P2 and P3. Shows specificity towards FGF2 in vitro. This Mus musculus (Mouse) protein is Transmembrane protease serine 11C.